A 120-amino-acid chain; its full sequence is NAD(P)H-quinone oxidoreductase subunit 3, chloroplastic (120 aa).

Helical transmembrane passes span 2-22 (FLLY…VIPI), 64-84 (MFAL…PWAL), and 88-108 (ILGV…VLGL).

This sequence belongs to the complex I subunit 3 family. In terms of assembly, NDH is composed of at least 16 different subunits, 5 of which are encoded in the nucleus.

The protein resides in the plastid. It is found in the chloroplast thylakoid membrane. It carries out the reaction a plastoquinone + NADH + (n+1) H(+)(in) = a plastoquinol + NAD(+) + n H(+)(out). The enzyme catalyses a plastoquinone + NADPH + (n+1) H(+)(in) = a plastoquinol + NADP(+) + n H(+)(out). NDH shuttles electrons from NAD(P)H:plastoquinone, via FMN and iron-sulfur (Fe-S) centers, to quinones in the photosynthetic chain and possibly in a chloroplast respiratory chain. The immediate electron acceptor for the enzyme in this species is believed to be plastoquinone. Couples the redox reaction to proton translocation, and thus conserves the redox energy in a proton gradient. The protein is NAD(P)H-quinone oxidoreductase subunit 3, chloroplastic of Oenothera biennis (German evening primrose).